The chain runs to 1557 residues: ABC transporter atnG (1557 aa).

5 consecutive transmembrane segments (helical) span residues 27–47 (FTLYFEEAFLSIFPAATLILA), 70–90 (LKLLLLAPYSISQLLLLAFWM), 99–119 (LTIASTVLRFIATLPCGYLIH), 131–151 (IISIYFLLTLLFDIPLARTIW), and 159–179 (VSAIFIAGTVVKALLLILETW). Residues asparagine 202 and asparagine 249 are each glycosylated (N-linked (GlcNAc...) asparagine). A run of 6 helical transmembrane segments spans residues 256-276 (AGAMVVPIAKAFKWDLLAGVF), 311-331 (ATLLIGAYALVYGGIAIATAT), 385-405 (YIHDTWASLIEIGIALYLLYN), 412-432 (IAPIIIAFGCTVTAMKIAMMA), 490-510 (LLIAVVGLSNFNTLMTPIVSF), and 531-551 (LTSLTLFNLFAVFIGTLVESI). The region spanning 279–556 (LCQSGFIISQ…LVESISETAM (278 aa)) is the ABC transmembrane type-1 1 domain. The region spanning 593–829 (AFEVDVGWKN…LDYIQGFAIA (237 aa)) is the ABC transporter 1 domain. 625–632 (GAVGCGKT) contacts ATP. The N-linked (GlcNAc...) asparagine glycan is linked to asparagine 667. Residues 882-902 (LVYFGLMAIFVFLQAFPTVWV) form a helical membrane-spanning segment. Residues 882–1162 (LVYFGLMAIF…LITDWTVLET (281 aa)) enclose the ABC transmembrane type-1 2 domain. Asparagine 916 carries an N-linked (GlcNAc...) asparagine glycan. 4 helical membrane passes run 921–941 (IGVYWMFGVLGACFLLATACF), 996–1016 (AVLQTCLALFLCVAQLIIIAV), 1020–1040 (YITATIPLCVLVYCIIGTFYM), and 1105–1125 (LSLVLDMTVAGFVLVLMGIAV). Asparagine 1132 is a glycosylation site (N-linked (GlcNAc...) asparagine). The chain crosses the membrane as a helical span at residues 1135–1155 (SLGLALVNVVSLSASVKALIT). The region spanning 1199–1431 (VEYKNVSAFY…PSVFRELYKS (233 aa)) is the ABC transporter 2 domain. N-linked (GlcNAc...) asparagine glycosylation is found at asparagine 1203 and asparagine 1218. 1233–1240 (GRSGSGKS) is an ATP binding site. Disordered regions lie at residues 1439–1464 (ERQERAEAEARRRERVEKERAEEELR) and 1503–1557 (RTRS…RGLH). Positions 1507 to 1522 (RSRDHSAERRESKRYS) are enriched in basic and acidic residues.

The protein belongs to the ABC transporter superfamily. ABCC family. Conjugate transporter (TC 3.A.1.208) subfamily.

The protein localises to the cell membrane. ABC transporter; part of the gene cluster that mediates the biosynthesis of aspercryptins, linear lipopeptides built from six amino acids including 2 highly unusual and nonproteogenic amino acids, 2-amino-octanoic acid (2aoa) and 2-amino-dodecanol (2adol). The polypeptide is ABC transporter atnG (Emericella nidulans (strain FGSC A4 / ATCC 38163 / CBS 112.46 / NRRL 194 / M139) (Aspergillus nidulans)).